The following is a 531-amino-acid chain: T-complex protein 1 subunit zeta (531 aa).

The residue at position 2 (A2) is an N-acetylalanine. K5 is subject to N6-acetyllysine. G39 is an ADP binding site. G39 contributes to the ATP binding site. Residue D90 participates in Mg(2+) binding. ADP-binding residues include G91, T92, T93, S94, T158, and K159. Positions 91, 92, and 93 each coordinate ATP. K199 carries the N6-acetyllysine modification. The residue at position 205 (S205) is a Phosphoserine. K251 participates in a covalent cross-link: Glycyl lysine isopeptide (Lys-Gly) (interchain with G-Cter in SUMO2). 4 positions are modified to N6-acetyllysine: K287, K365, K377, and K388. A411 contributes to the ADP binding site. Positions 411, 412, 496, and 501 each coordinate ATP. D496 provides a ligand contact to ADP.

It belongs to the TCP-1 chaperonin family. As to quaternary structure, component of the chaperonin-containing T-complex (TRiC), a hexadecamer composed of two identical back-to-back stacked rings enclosing a protein folding chamber. Each ring is made up of eight different subunits: TCP1/CCT1, CCT2, CCT3, CCT4, CCT5, CCT6A/CCT6, CCT7, CCT8. Interacts with PACRG.

Its subcellular location is the cytoplasm. It carries out the reaction ATP + H2O = ADP + phosphate + H(+). Component of the chaperonin-containing T-complex (TRiC), a molecular chaperone complex that assists the folding of actin, tubulin and other proteins upon ATP hydrolysis. The TRiC complex mediates the folding of WRAP53/TCAB1, thereby regulating telomere maintenance. The protein is T-complex protein 1 subunit zeta (CCT6) of Oryctolagus cuniculus (Rabbit).